The chain runs to 262 residues: tRNA pseudouridine synthase A (262 aa).

The active-site Nucleophile is D54. Y113 provides a ligand contact to substrate.

It belongs to the tRNA pseudouridine synthase TruA family. As to quaternary structure, homodimer.

The catalysed reaction is uridine(38/39/40) in tRNA = pseudouridine(38/39/40) in tRNA. Its function is as follows. Formation of pseudouridine at positions 38, 39 and 40 in the anticodon stem and loop of transfer RNAs. In Lactobacillus acidophilus (strain ATCC 700396 / NCK56 / N2 / NCFM), this protein is tRNA pseudouridine synthase A.